The chain runs to 497 residues: Ectonucleoside triphosphate diphosphohydrolase 8 (497 aa).

Over 1–8 (MGLSWKER) the chain is Cytoplasmic. Residues 9-29 (VFMALLGVAAASGLTMLVLIL) traverse the membrane as a helical segment. Topologically, residues 30 to 473 (VKAINVLLPA…AQSYSIWTAG (444 aa)) are extracellular. An intrachain disulfide couples C78 to C102. E168 serves as the catalytic Proton acceptor. Cysteines 245 and 294 form a disulfide. The N-linked (GlcNAc...) asparagine glycan is linked to N306. Residues C331 and C337 are joined by a disulfide bond. N365 is a glycosylation site (N-linked (GlcNAc...) asparagine). Residues C383 and C405 are joined by a disulfide bond. Residues 474 to 494 (VVFAVLTLVAILGAAAIQIFW) form a helical membrane-spanning segment. At 495 to 497 (TQD) the chain is on the cytoplasmic side.

It belongs to the GDA1/CD39 NTPase family. Ca(2+) serves as cofactor. It depends on Mg(2+) as a cofactor. In terms of processing, N-glycosylated. In terms of tissue distribution, expressed in liver, jejunum and kidney.

The protein localises to the cell membrane. It catalyses the reaction a ribonucleoside 5'-triphosphate + 2 H2O = a ribonucleoside 5'-phosphate + 2 phosphate + 2 H(+). Its function is as follows. Canalicular ectonucleoside NTPDase responsible for the main hepatic NTPDase activity. Ectonucleoside NTPDases catalyze the hydrolysis of gamma- and beta-phosphate residues of nucleotides, playing a central role in concentration of extracellular nucleotides. Has activity toward ATP, ADP, UTP and UDP, but not toward AMP. The sequence is that of Ectonucleoside triphosphate diphosphohydrolase 8 (Entpd8) from Mus musculus (Mouse).